The primary structure comprises 224 residues: Peptidyl-prolyl cis-trans isomerase FKBP3 (224 aa).

Alanine 2 carries the post-translational modification N-acetylalanine. The residue at position 36 (serine 36) is a Phosphoserine. A disordered region spans residues 87–119; that stretch reads NVKLNEDKPKETKSEETPDEGPPKYTKSVLKKG. Positions 89 to 102 are enriched in basic and acidic residues; it reads KLNEDKPKETKSEE. Lysine 99 carries the post-translational modification N6-acetyllysine. One can recognise a PPIase FKBP-type domain in the interval 128 to 224; that stretch reads GDVVHCWYTG…IFEVELVDID (97 aa). Serine 152 bears the Phosphoserine mark. Residue lysine 170 is modified to N6-acetyllysine.

This sequence belongs to the FKBP-type PPIase family.

The protein localises to the nucleus. The catalysed reaction is [protein]-peptidylproline (omega=180) = [protein]-peptidylproline (omega=0). Its activity is regulated as follows. Inhibited preferentially by rapamycin over FK506. In terms of biological role, FK506- and rapamycin-binding proteins (FKBPs) constitute a family of receptors for the two immunosuppressants which inhibit T-cell proliferation by arresting two distinct cytoplasmic signal transmission pathways. PPIases accelerate the folding of proteins. The protein is Peptidyl-prolyl cis-trans isomerase FKBP3 (FKBP3) of Oryctolagus cuniculus (Rabbit).